Consider the following 613-residue polypeptide: Dihydroxy-acid dehydratase (613 aa).

D81 lines the Mg(2+) pocket. C122 is a binding site for [2Fe-2S] cluster. Residues D123 and K124 each coordinate Mg(2+). K124 is subject to N6-carboxylysine. Residue C195 coordinates [2Fe-2S] cluster. A Mg(2+)-binding site is contributed by E491. S517 (proton acceptor) is an active-site residue.

The protein belongs to the IlvD/Edd family. As to quaternary structure, homodimer. Requires [2Fe-2S] cluster as cofactor. Mg(2+) serves as cofactor.

It carries out the reaction (2R)-2,3-dihydroxy-3-methylbutanoate = 3-methyl-2-oxobutanoate + H2O. It catalyses the reaction (2R,3R)-2,3-dihydroxy-3-methylpentanoate = (S)-3-methyl-2-oxopentanoate + H2O. Its pathway is amino-acid biosynthesis; L-isoleucine biosynthesis; L-isoleucine from 2-oxobutanoate: step 3/4. The protein operates within amino-acid biosynthesis; L-valine biosynthesis; L-valine from pyruvate: step 3/4. In terms of biological role, functions in the biosynthesis of branched-chain amino acids. Catalyzes the dehydration of (2R,3R)-2,3-dihydroxy-3-methylpentanoate (2,3-dihydroxy-3-methylvalerate) into 2-oxo-3-methylpentanoate (2-oxo-3-methylvalerate) and of (2R)-2,3-dihydroxy-3-methylbutanoate (2,3-dihydroxyisovalerate) into 2-oxo-3-methylbutanoate (2-oxoisovalerate), the penultimate precursor to L-isoleucine and L-valine, respectively. The protein is Dihydroxy-acid dehydratase of Photobacterium profundum (strain SS9).